The following is a 70-amino-acid chain: Melittin (70 aa).

Residues 1–21 form the signal peptide; it reads MKFLVNVALVFMVVYISFIYA. Positions 22–43 are cleaved as a propeptide — removed by a dipeptidylpeptidase; it reads APEPEPAPEAEAEADAEADPEA. Residue G44 is modified to N-formylglycine; partial. Residue Q69 is modified to Glutamine amide.

The protein belongs to the melittin family. As to quaternary structure, monomer (in solution and for integration into membranes), homotetramer (in solution and potentially as a toroidal pore in membranes), and potenially homomultimer (as a toroidal pore in membranes). As to expression, expressed by the venom gland.

The protein resides in the secreted. Its subcellular location is the target cell membrane. Main toxin of bee venom with strong hemolytic activity and antimicrobial activity. It has enhancing effects on bee venom phospholipase A2 activity. This amphipathic toxin binds to negatively charged membrane surface and forms pore by inserting into lipid bilayers inducing the leakage of ions and molecules and the enhancement of permeability that ultimately leads to cell lysis. It acts as a voltage-gated pore with higher selectivity for anions over cations. The ion conductance has been shown to be voltage-dependent. Self-association of melittin in membranes is promoted by high ionic strength, but not by the presence of negatively charged lipids. In vivo, intradermal injection into healthy human volunteers produce sharp pain sensation and an inflammatory response. It produces pain by activating primary nociceptor cells directly and indirectly due to its ability to activate plasma membrane phospholipase A2 and its pore-forming activity. The sequence is that of Melittin (MELT) from Apis cerana cerana (Oriental honeybee).